The primary structure comprises 122 residues: T-cell receptor beta chain V region C5 (122 aa).

Residues 1-7 form the signal peptide; that stretch reads ILLCAKH. Residues 8 to 103 are v segment; it reads MEAAVTQSPR…TAVYFCASSG (96 aa). A disulfide bond links cysteine 31 and cysteine 99. The d segment stretch occupies residues 104-108; the sequence is TGGAL. The tract at residues 109 to 122 is j segment; that stretch reads DTQYFGPGTRLLVL.

In Mus musculus (Mouse), this protein is T-cell receptor beta chain V region C5.